A 108-amino-acid polypeptide reads, in one-letter code: Anthranilate 1,2-dioxygenase ferredoxin subunit (108 aa).

The 97-residue stretch at 9–105 (WHPLGAIDEF…IRIVDGQVEV (97 aa)) folds into the Rieske domain. 4 residues coordinate [2Fe-2S] cluster: cysteine 49, histidine 51, cysteine 68, and histidine 71.

The protein belongs to the bacterial ring-hydroxylating dioxygenase ferredoxin component family. Part of a multicomponent enzyme system composed of a reductase (AndAa), a ferredoxin (AndAb) and a two-subunit oxygenase component (AndAc and AndAd). [2Fe-2S] cluster is required as a cofactor.

It participates in aromatic compound metabolism; anthranilate degradation via hydroxylation; catechol from anthranilate: step 1/1. Functionally, part of the multicomponent anthranilate dioxygenase, that converts anthranilate to catechol. This protein seems to be a 2Fe-2S ferredoxin. This chain is Anthranilate 1,2-dioxygenase ferredoxin subunit, found in Burkholderia cepacia (Pseudomonas cepacia).